Here is a 171-residue protein sequence, read N- to C-terminus: MEHSRFLSGLILAAFLSRVSPYEVEMEELEDKVFVSCNTSIIWLQGTEGELLSDKKIDLGKRILDPRGLYKCNAPKEQDSNSKIFLQVYYRMCQNCVELDSATLAGIIVTDIIATLLLALGVYCFAGHEMGRFSRAADTQDLLRNDQLYQPLRDRNDGQYSRLGENWARNK.

A signal peptide spans 1-21; it reads MEHSRFLSGLILAAFLSRVSP. Residues 22–104 are Extracellular-facing; that stretch reads YEVEMEELED…NCVELDSATL (83 aa). Cysteine 37 and cysteine 72 are oxidised to a cystine. An N-linked (GlcNAc...) asparagine glycan is attached at asparagine 38. A helical transmembrane segment spans residues 105–125; it reads AGIIVTDIIATLLLALGVYCF. Over 126–171 the chain is Cytoplasmic; sequence AGHEMGRFSRAADTQDLLRNDQLYQPLRDRNDGQYSRLGENWARNK. An ITAM domain is found at 138 to 166; the sequence is DTQDLLRNDQLYQPLRDRNDGQYSRLGEN. A phosphotyrosine mark is found at tyrosine 149 and tyrosine 160.

In terms of assembly, the TCR-CD3 complex is composed of a CD3D/CD3E and a CD3G/CD3E heterodimers that preferentially associate with TCRalpha and TCRbeta, respectively, to form TCRalpha/CD3E/CD3G and TCRbeta/CD3G/CD3E trimers. In turn, the hexamer interacts with CD3Z homodimer to form the TCR-CD3 complex. Alternatively, TCRalpha and TCRbeta can be replaced by TCRgamma and TCRdelta. Interacts with coreceptors CD4 and CD8. Post-translationally, phosphorylated on Tyr residues after T-cell receptor triggering by LCK in association with CD4/CD8. CD3D is mostly present on T-lymphocytes with its TCR-CD3 partners. Present also in fetal NK-cells.

The protein resides in the cell membrane. Its function is as follows. Part of the TCR-CD3 complex present on T-lymphocyte cell surface that plays an essential role in adaptive immune response. When antigen presenting cells (APCs) activate T-cell receptor (TCR), TCR-mediated signals are transmitted across the cell membrane by the CD3 chains CD3D, CD3E, CD3G and CD3Z. All CD3 chains contain immunoreceptor tyrosine-based activation motifs (ITAMs) in their cytoplasmic domain. Upon TCR engagement, these motifs become phosphorylated by Src family protein tyrosine kinases LCK and FYN, resulting in the activation of downstream signaling pathways. In addition of this role of signal transduction in T-cell activation, CD3D plays an essential role in thymocyte differentiation. Indeed, participates in correct intracellular TCR-CD3 complex assembly and surface expression. In absence of a functional TCR-CD3 complex, thymocytes are unable to differentiate properly. Interacts with CD4 and CD8 and thus serves to establish a functional link between the TCR and coreceptors CD4 and CD8, which is needed for activation and positive selection of CD4 or CD8 T-cells. This is T-cell surface glycoprotein CD3 delta chain (CD3D) from Sus scrofa (Pig).